Here is a 57-residue protein sequence, read N- to C-terminus: Protein CgkB (57 aa).

This chain is Protein CgkB (cgkB), found in Pseudoalteromonas carrageenovora (Alteromonas carrageenovora).